Consider the following 380-residue polypeptide: Protein FAM110B (380 aa).

Residues 92–272 are disordered; the sequence is ALGSPTLKGF…RPSLQRSKSD (181 aa). The span at 100 to 110 shows a compositional bias: gly residues; the sequence is GFGGGGGGAKS. Residues 127-138 are compositionally biased toward polar residues; the sequence is ILNSSEGSSTGS. The segment covering 153 to 162 has biased composition (basic and acidic residues); the sequence is DAAELHRHSF. The segment covering 239–248 has biased composition (low complexity); sequence KVAAPAAVKS. Phosphoserine is present on residues serine 248 and serine 311. Residues 327 to 347 form a disordered region; it reads DCEQSQDSNSDLRNDDSANDR. The segment covering 336–345 has biased composition (basic and acidic residues); it reads SDLRNDDSAN.

It belongs to the FAM110 family.

Its subcellular location is the cytoplasm. It localises to the cytoskeleton. The protein resides in the microtubule organizing center. The protein localises to the centrosome. This Bos taurus (Bovine) protein is Protein FAM110B (FAM110B).